Consider the following 393-residue polypeptide: Formate-dependent phosphoribosylglycinamide formyltransferase (393 aa).

Residues 22–23 (EL) and Glu-82 each bind N(1)-(5-phospho-beta-D-ribosyl)glycinamide. ATP-binding positions include Arg-114, Lys-155, 160 to 165 (SSGKGQ), 195 to 198 (EGLV), and Glu-203. Positions 119–308 (RLAAETLQLP…EFALHVRAFL (190 aa)) constitute an ATP-grasp domain. Residues Glu-267 and Glu-279 each contribute to the Mg(2+) site. N(1)-(5-phospho-beta-D-ribosyl)glycinamide-binding positions include Asp-286, Lys-355, and 362 to 363 (RR).

It belongs to the PurK/PurT family. As to quaternary structure, homodimer.

It carries out the reaction N(1)-(5-phospho-beta-D-ribosyl)glycinamide + formate + ATP = N(2)-formyl-N(1)-(5-phospho-beta-D-ribosyl)glycinamide + ADP + phosphate + H(+). Its pathway is purine metabolism; IMP biosynthesis via de novo pathway; N(2)-formyl-N(1)-(5-phospho-D-ribosyl)glycinamide from N(1)-(5-phospho-D-ribosyl)glycinamide (formate route): step 1/1. In terms of biological role, involved in the de novo purine biosynthesis. Catalyzes the transfer of formate to 5-phospho-ribosyl-glycinamide (GAR), producing 5-phospho-ribosyl-N-formylglycinamide (FGAR). Formate is provided by PurU via hydrolysis of 10-formyl-tetrahydrofolate. This Yersinia pseudotuberculosis serotype IB (strain PB1/+) protein is Formate-dependent phosphoribosylglycinamide formyltransferase.